We begin with the raw amino-acid sequence, 232 residues long: Ribose-5-phosphate isomerase A (232 aa).

Substrate is bound by residues T28–T31, D83–D86, and K96–G99. Catalysis depends on E105, which acts as the Proton acceptor. Position 123 (K123) interacts with substrate.

It belongs to the ribose 5-phosphate isomerase family. Homodimer.

It catalyses the reaction aldehydo-D-ribose 5-phosphate = D-ribulose 5-phosphate. It participates in carbohydrate degradation; pentose phosphate pathway; D-ribose 5-phosphate from D-ribulose 5-phosphate (non-oxidative stage): step 1/1. Functionally, catalyzes the reversible conversion of ribose-5-phosphate to ribulose 5-phosphate. The sequence is that of Ribose-5-phosphate isomerase A from Rhizobium etli (strain ATCC 51251 / DSM 11541 / JCM 21823 / NBRC 15573 / CFN 42).